A 726-amino-acid polypeptide reads, in one-letter code: Catalase-peroxidase (726 aa).

The disordered stretch occupies residues 1-33 (MSTSDDIHNTTATGKCPFHQGGHDQSAGAGTTT). Residues 105 to 226 (WHGAGTYRSI…LGATEMGLIY (122 aa)) constitute a cross-link (tryptophyl-tyrosyl-methioninium (Trp-Tyr) (with M-252)). The active-site Proton acceptor is histidine 106. The tryptophyl-tyrosyl-methioninium (Tyr-Met) (with W-105) cross-link spans 226 to 252 (YVNPEGPDHSGEPLSAAAAIRATFGNM). Heme b is bound at residue histidine 267.

Belongs to the peroxidase family. Peroxidase/catalase subfamily. In terms of assembly, homodimer or homotetramer. Heme b is required as a cofactor. Post-translationally, formation of the three residue Trp-Tyr-Met cross-link is important for the catalase, but not the peroxidase activity of the enzyme.

It carries out the reaction H2O2 + AH2 = A + 2 H2O. It catalyses the reaction 2 H2O2 = O2 + 2 H2O. Its function is as follows. Bifunctional enzyme with both catalase and broad-spectrum peroxidase activity. This chain is Catalase-peroxidase, found in Shigella sonnei (strain Ss046).